The primary structure comprises 605 residues: MRAMACVRRVRNFCIVAHIDHGKSTLADRLIERTRAVEERLQHAQMTDNMELERERGITIKSHAVCIPYTDAHGTEYVLNFVDTPGHADFAYEVSRAIAACEGALLVVDATQGVESQTISNLYLVLEHNLEIIPVINKIDLPTADVPRVLQQVEHDLGLDPASSVLISAKTGENVDALFDAIITRIPPPQGSGTAALQALVFDCHYDQYRGVVVHIRVFEGQVTSGMVIRFMSNGAEYRVEETGVFVFNLIAREALCAGDVGYLSANVKTVSDVQVGDTITDASCPCDTPRAGFRRVKPVVFSSVYPVDTDECEQLREALERLALNDASISWERDSSLALGHGFRCGFLGLLHLEVVQQRLEREFNQTVIFTAPQVQYYVFLKTGQRIVCDNPAHYPLEQEIAQVHEPYIRATIITPTEVLGAVMTLCIEKRAYQTAVNYLDQKRVELVYEMPLAEILFGFYDRLKSISHGYASFDYELIESKLTDLVKVDILINGKPVDALAQLCYRPHARRRAQAVCARLKEEISRQQFKIAIQGSIGGQIISRETVSPFRKDVLAKCYGGDITRKRKLLEKQKEGKKRMKMVGDVEIPQTAFLSVLKEASDA.

Residues 8 to 190 (RRVRNFCIVA…AIITRIPPPQ (183 aa)) form the tr-type G domain. Residues 20–25 (DHGKST) and 137–140 (NKID) each bind GTP.

The protein belongs to the TRAFAC class translation factor GTPase superfamily. Classic translation factor GTPase family. LepA subfamily.

It localises to the cell inner membrane. The catalysed reaction is GTP + H2O = GDP + phosphate + H(+). Functionally, required for accurate and efficient protein synthesis under certain stress conditions. May act as a fidelity factor of the translation reaction, by catalyzing a one-codon backward translocation of tRNAs on improperly translocated ribosomes. Back-translocation proceeds from a post-translocation (POST) complex to a pre-translocation (PRE) complex, thus giving elongation factor G a second chance to translocate the tRNAs correctly. Binds to ribosomes in a GTP-dependent manner. This is Elongation factor 4 from Treponema pallidum (strain Nichols).